Reading from the N-terminus, the 433-residue chain is Transcription factor TCP18 (433 aa).

Disordered stretches follow at residues 130 to 163 (QRISTSQDPKMKKAKKPSRTDRHSKIKTAKGTRD) and 247 to 281 (DDRGSNTNTTETRGNKVDGRSMRGKRKRPEPRTPI). Positions 148–206 (RTDRHSKIKTAKGTRDRRMRLSLDVAKELFGLQDMLGFDKASKTVEWLLTQAKPEIIKI) constitute a TCP domain. In terms of domain architecture, R spans 287 to 304 (KEERAKARERAKGRTMEK).

Expressed in unelongated axillary buds, and, to a lower extent, in axillary structures such as flowers and siliques.

It localises to the nucleus. In terms of biological role, transcription factor that prevents axillary bud outgrowth and delays early axillary bud development. Indirectly required for the auxin-induced control of apical dominance. This is Transcription factor TCP18 from Arabidopsis thaliana (Mouse-ear cress).